Here is a 399-residue protein sequence, read N- to C-terminus: S-adenosylmethionine synthase (399 aa).

H17 lines the ATP pocket. D19 is a Mg(2+) binding site. E52 contributes to the K(+) binding site. 2 residues coordinate L-methionine: E65 and Q109. Positions Q109–A119 are flexible loop. Residues D177–K179, K243–F244, D252, R258–K259, A275, and K279 contribute to the ATP site. Position 252 (D252) interacts with L-methionine. An L-methionine-binding site is contributed by K283.

Belongs to the AdoMet synthase family. Homotetramer; dimer of dimers. Mg(2+) serves as cofactor. K(+) is required as a cofactor.

The protein localises to the cytoplasm. It catalyses the reaction L-methionine + ATP + H2O = S-adenosyl-L-methionine + phosphate + diphosphate. It functions in the pathway amino-acid biosynthesis; S-adenosyl-L-methionine biosynthesis; S-adenosyl-L-methionine from L-methionine: step 1/1. Catalyzes the formation of S-adenosylmethionine (AdoMet) from methionine and ATP. The overall synthetic reaction is composed of two sequential steps, AdoMet formation and the subsequent tripolyphosphate hydrolysis which occurs prior to release of AdoMet from the enzyme. The sequence is that of S-adenosylmethionine synthase from Bradyrhizobium sp. (strain ORS 278).